We begin with the raw amino-acid sequence, 429 residues long: Bifunctional protein GlmU (429 aa).

Positions 1 to 223 (MKTSILILAA…EDEFMGINDK (223 aa)) are pyrophosphorylase. Residues 8–11 (LAAG), Lys-22, and 81–82 (GT) contribute to the UDP-N-acetyl-alpha-D-glucosamine site. Asp-102 provides a ligand contact to Mg(2+). 4 residues coordinate UDP-N-acetyl-alpha-D-glucosamine: Gly-135, Glu-149, Asn-164, and Asn-221. A Mg(2+)-binding site is contributed by Asn-221. The linker stretch occupies residues 224–244 (FELSIAENFMQEKIKKYWMQQ). The tract at residues 245 to 429 (GVIFHLPQST…KDYYYKKFQK (185 aa)) is N-acetyltransferase. UDP-N-acetyl-alpha-D-glucosamine contacts are provided by Arg-308 and Lys-325. The active-site Proton acceptor is His-336. Residues Tyr-339 and Asn-350 each coordinate UDP-N-acetyl-alpha-D-glucosamine. Acetyl-CoA-binding positions include 359-360 (NY), Ser-378, Ala-396, and Arg-413.

The protein in the N-terminal section; belongs to the N-acetylglucosamine-1-phosphate uridyltransferase family. It in the C-terminal section; belongs to the transferase hexapeptide repeat family. As to quaternary structure, homotrimer. The cofactor is Mg(2+).

The protein localises to the cytoplasm. The catalysed reaction is alpha-D-glucosamine 1-phosphate + acetyl-CoA = N-acetyl-alpha-D-glucosamine 1-phosphate + CoA + H(+). It catalyses the reaction N-acetyl-alpha-D-glucosamine 1-phosphate + UTP + H(+) = UDP-N-acetyl-alpha-D-glucosamine + diphosphate. It functions in the pathway nucleotide-sugar biosynthesis; UDP-N-acetyl-alpha-D-glucosamine biosynthesis; N-acetyl-alpha-D-glucosamine 1-phosphate from alpha-D-glucosamine 6-phosphate (route II): step 2/2. Its pathway is nucleotide-sugar biosynthesis; UDP-N-acetyl-alpha-D-glucosamine biosynthesis; UDP-N-acetyl-alpha-D-glucosamine from N-acetyl-alpha-D-glucosamine 1-phosphate: step 1/1. It participates in bacterial outer membrane biogenesis; LPS lipid A biosynthesis. Its function is as follows. Catalyzes the last two sequential reactions in the de novo biosynthetic pathway for UDP-N-acetylglucosamine (UDP-GlcNAc). The C-terminal domain catalyzes the transfer of acetyl group from acetyl coenzyme A to glucosamine-1-phosphate (GlcN-1-P) to produce N-acetylglucosamine-1-phosphate (GlcNAc-1-P), which is converted into UDP-GlcNAc by the transfer of uridine 5-monophosphate (from uridine 5-triphosphate), a reaction catalyzed by the N-terminal domain. This Campylobacter jejuni subsp. jejuni serotype O:6 (strain 81116 / NCTC 11828) protein is Bifunctional protein GlmU.